Consider the following 365-residue polypeptide: TD and POZ domain-containing protein 1-like (365 aa).

Positions K19 to V149 constitute an MATH domain. The BTB domain maps to T188 to H255.

The protein belongs to the Tdpoz family.

In Mus musculus (Mouse), this protein is TD and POZ domain-containing protein 1-like.